Reading from the N-terminus, the 192-residue chain is SRP-independent targeting protein 2 homolog (192 aa).

A run of 2 helical transmembrane segments spans residues 16–36 (ILTFMLAADLIVNVLFWILRF) and 102–122 (WILIFLAALTSVKVFAFYLLV). The disordered stretch occupies residues 149–192 (LNQPPQQQQQQQQQQHQQHATPSEPVLSKRQQKLRKKAAKYSRP). The segment covering 151–167 (QPPQQQQQQQQQQHQQH) has biased composition (low complexity). A compositionally biased stretch (basic residues) spans 178 to 192 (RQQKLRKKAAKYSRP).

It belongs to the TMEM208 family.

It localises to the endoplasmic reticulum membrane. In terms of biological role, may function in a SRP (signal recognition particle) and GET (guided entry of tail-anchored proteins) independent pathway for targeting a broad range of substrate proteins to the endoplasmic reticulum. Has a role in meiosis. The sequence is that of SRP-independent targeting protein 2 homolog from Schizosaccharomyces pombe (strain 972 / ATCC 24843) (Fission yeast).